Here is a 372-residue protein sequence, read N- to C-terminus: 4-hydroxy-3-methylbut-2-en-1-yl diphosphate synthase (flavodoxin) (372 aa).

4 residues coordinate [4Fe-4S] cluster: cysteine 270, cysteine 273, cysteine 305, and glutamate 312.

The protein belongs to the IspG family. [4Fe-4S] cluster serves as cofactor.

It carries out the reaction (2E)-4-hydroxy-3-methylbut-2-enyl diphosphate + oxidized [flavodoxin] + H2O + 2 H(+) = 2-C-methyl-D-erythritol 2,4-cyclic diphosphate + reduced [flavodoxin]. The protein operates within isoprenoid biosynthesis; isopentenyl diphosphate biosynthesis via DXP pathway; isopentenyl diphosphate from 1-deoxy-D-xylulose 5-phosphate: step 5/6. Functionally, converts 2C-methyl-D-erythritol 2,4-cyclodiphosphate (ME-2,4cPP) into 1-hydroxy-2-methyl-2-(E)-butenyl 4-diphosphate. This Escherichia coli O9:H4 (strain HS) protein is 4-hydroxy-3-methylbut-2-en-1-yl diphosphate synthase (flavodoxin).